Reading from the N-terminus, the 261-residue chain is Lipase LipV (261 aa).

The active-site Nucleophile is serine 87. Residues aspartate 217 and histidine 240 each act as charge relay system in the active site.

It belongs to the AB hydrolase superfamily.

It catalyses the reaction a carboxylic ester + H2O = an alcohol + a carboxylate + H(+). It carries out the reaction a tetradecanoate ester + H2O = an aliphatic alcohol + tetradecanoate + H(+). The enzyme catalyses decanoate ester + H2O = decanoate + an aliphatic alcohol + H(+). The catalysed reaction is an octanoate ester + H2O = an aliphatic alcohol + octanoate + H(+). It catalyses the reaction a dodecanoate ester + H2O = an aliphatic alcohol + dodecanoate + H(+). It carries out the reaction a butanoate ester + H2O = an aliphatic alcohol + butanoate + H(+). The enzyme catalyses hexadecanoate ester + H2O = an aliphatic alcohol + hexadecanoate + H(+). The catalysed reaction is octadecanoate ester + H2O = an aliphatic alcohol + octadecanoate + H(+). With respect to regulation, is inhibited by tetrahydrolipstatin, a specific lipase inhibitor and RHC 80267, a diacylglycerol lipase inhibitor, but not by phenylglyoxal and iodoacetate. In terms of biological role, lipase that displays broad substrate specificity and preferentially hydrolyzes p-nitrophenyl myristate in vitro. Also shows significant activity with pNP-butyrate (68%), pNP-octanoate (82%), pNP-decanoate (90%), and pNP-laurate (74%). Is probably involved in lipid catabolism. Is active at low pH, and might play some important role in mycobacterial biology in macrophages where the bacteria encounters acidic stress. The sequence is that of Lipase LipV from Mycobacterium tuberculosis (strain ATCC 25618 / H37Rv).